Consider the following 286-residue polypeptide: NADP-dependent dehydrogenase clz5 (286 aa).

The NADP(+) site is built by S49, L51, D93, Y207, K211, I241, and Q245. The active-site Proton acceptor is the Y207. Catalysis depends on Y207, which acts as the Proton donor. Catalysis depends on K211, which acts as the Lowers pKa of active site Tyr.

This sequence belongs to the short-chain dehydrogenases/reductases (SDR) family. Homodimer.

The protein resides in the cytoplasm. It is found in the cytosol. Its pathway is secondary metabolite biosynthesis. In terms of biological role, NADP-dependent dehydrogenase; part of the gene cluster that mediates the biosynthesis of squalestatin S1 (SQS1, also known as zaragozic acid A), a heavily oxidized fungal polyketide that offers potent cholesterol lowering activity by targeting squalene synthase (SS). SQS1 is composed of a 2,8-dioxobicyclic[3.2.1]octane-3,4,5-tricarboxyclic acid core that is connected to two lipophilic polyketide arms. These initial steps feature the priming of an unusual benzoic acid starter unit onto the highly reducing polyketide synthase clz14, followed by oxaloacetate extension and product release to generate a tricarboxylic acid containing product. The phenylalanine ammonia lyase (PAL) clz10 and the acyl-CoA ligase clz12 are involved in transforming phenylalanine into benzoyl-CoA. The citrate synthase-like protein clz17 is involved in connecting the C-alpha-carbons of the hexaketide chain and oxaloacetate to afford the tricarboxylic acid unit. The potential hydrolytic enzymes, clz11 and clz13, are in close proximity to pks2 and may participate in product release. On the other side, the tetraketide arm is synthesized by a the squalestatin tetraketide synthase clz2 and enzymatically esterified to the core in the last biosynthetic step, by the acetyltransferase clz6. The biosynthesis of the tetraketide must involve 3 rounds of chain extension. After the first and second rounds methyl-transfer occurs, and in all rounds of extension the ketoreductase and dehydratase are active. The enoyl reductase and C-MeT of clz2 are not active in the final round of extension. The acetyltransferase clz6 appears to have a broad substrate selectivity for its acyl CoA substrate, allowing the in vitro synthesis of novel squalestatins. The biosynthesis of SQS1 requires several oxidative steps likely performed by oxidoreductases clz3, clz15 and clz16. Finally, in support of the identification of the cluster as being responsible for SQS1 production, the cluster contains a gene encoding a putative squalene synthase (SS) clz20, suggesting a likely mechanism for self-resistance. This chain is NADP-dependent dehydrogenase clz5, found in Cochliobolus lunatus (Filamentous fungus).